Reading from the N-terminus, the 152-residue chain is Urease accessory protein UreE (152 aa).

The protein belongs to the UreE family.

The protein resides in the cytoplasm. In terms of biological role, involved in urease metallocenter assembly. Binds nickel. Probably functions as a nickel donor during metallocenter assembly. The chain is Urease accessory protein UreE from Psychromonas ingrahamii (strain DSM 17664 / CCUG 51855 / 37).